Here is a 392-residue protein sequence, read N- to C-terminus: S-adenosylmethionine synthase (392 aa).

Position 15 (His-15) interacts with ATP. Asp-17 provides a ligand contact to Mg(2+). Position 43 (Glu-43) interacts with K(+). L-methionine-binding residues include Glu-56 and Gln-99. The interval 99-109 (QSKDIAQGVDE) is flexible loop. ATP contacts are provided by residues 173 to 175 (DGK), 239 to 240 (KF), Asp-248, 254 to 255 (RK), Ala-271, and Lys-275. L-methionine is bound at residue Asp-248. Position 279 (Lys-279) interacts with L-methionine.

It belongs to the AdoMet synthase family. Homotetramer; dimer of dimers. Mg(2+) serves as cofactor. The cofactor is K(+).

The protein localises to the cytoplasm. The catalysed reaction is L-methionine + ATP + H2O = S-adenosyl-L-methionine + phosphate + diphosphate. It functions in the pathway amino-acid biosynthesis; S-adenosyl-L-methionine biosynthesis; S-adenosyl-L-methionine from L-methionine: step 1/1. Its function is as follows. Catalyzes the formation of S-adenosylmethionine (AdoMet) from methionine and ATP. The overall synthetic reaction is composed of two sequential steps, AdoMet formation and the subsequent tripolyphosphate hydrolysis which occurs prior to release of AdoMet from the enzyme. This chain is S-adenosylmethionine synthase, found in Finegoldia magna (strain ATCC 29328 / DSM 20472 / WAL 2508) (Peptostreptococcus magnus).